We begin with the raw amino-acid sequence, 218 residues long: Elongation factor Ts (218 aa).

Residues threonine 82 to valine 85 form an involved in Mg(2+) ion dislocation from EF-Tu region.

This sequence belongs to the EF-Ts family.

It is found in the cytoplasm. Its function is as follows. Associates with the EF-Tu.GDP complex and induces the exchange of GDP to GTP. It remains bound to the aminoacyl-tRNA.EF-Tu.GTP complex up to the GTP hydrolysis stage on the ribosome. This Prochlorococcus marinus (strain AS9601) protein is Elongation factor Ts.